Here is a 336-residue protein sequence, read N- to C-terminus: Glyceraldehyde-3-phosphate dehydrogenase 1 (336 aa).

NAD(+) contacts are provided by residues 12–13, aspartate 34, and serine 120; that span reads RI. Residues 150-152, threonine 181, arginine 198, 211-212, and arginine 234 contribute to the D-glyceraldehyde 3-phosphate site; these read SCT and TG. The Nucleophile role is filled by cysteine 151. Asparagine 316 provides a ligand contact to NAD(+).

It belongs to the glyceraldehyde-3-phosphate dehydrogenase family. Homotetramer.

The protein localises to the cytoplasm. It carries out the reaction D-glyceraldehyde 3-phosphate + phosphate + NAD(+) = (2R)-3-phospho-glyceroyl phosphate + NADH + H(+). Its pathway is carbohydrate degradation; glycolysis; pyruvate from D-glyceraldehyde 3-phosphate: step 1/5. Its function is as follows. Catalyzes the oxidative phosphorylation of glyceraldehyde 3-phosphate (G3P) to 1,3-bisphosphoglycerate (BPG) using the cofactor NAD. The first reaction step involves the formation of a hemiacetal intermediate between G3P and a cysteine residue, and this hemiacetal intermediate is then oxidized to a thioester, with concomitant reduction of NAD to NADH. The reduced NADH is then exchanged with the second NAD, and the thioester is attacked by a nucleophilic inorganic phosphate to produce BPG. The polypeptide is Glyceraldehyde-3-phosphate dehydrogenase 1 (gapA1) (Staphylococcus epidermidis (strain ATCC 35984 / DSM 28319 / BCRC 17069 / CCUG 31568 / BM 3577 / RP62A)).